The following is a 403-amino-acid chain: Cysteine desulfurase IscS (403 aa).

Pyridoxal 5'-phosphate is bound by residues 73–74, asparagine 153, glutamine 181, and 201–203; these read AT and SAH. The residue at position 204 (lysine 204) is an N6-(pyridoxal phosphate)lysine. Threonine 241 provides a ligand contact to pyridoxal 5'-phosphate. Catalysis depends on cysteine 326, which acts as the Cysteine persulfide intermediate. Cysteine 326 contributes to the [2Fe-2S] cluster binding site.

The protein belongs to the class-V pyridoxal-phosphate-dependent aminotransferase family. NifS/IscS subfamily. Homodimer. Forms a heterotetramer with IscU, interacts with other sulfur acceptors. Pyridoxal 5'-phosphate serves as cofactor.

The protein resides in the cytoplasm. It catalyses the reaction (sulfur carrier)-H + L-cysteine = (sulfur carrier)-SH + L-alanine. It participates in cofactor biosynthesis; iron-sulfur cluster biosynthesis. Its function is as follows. Master enzyme that delivers sulfur to a number of partners involved in Fe-S cluster assembly, tRNA modification or cofactor biosynthesis. Catalyzes the removal of elemental sulfur atoms from cysteine to produce alanine. Functions as a sulfur delivery protein for Fe-S cluster synthesis onto IscU, an Fe-S scaffold assembly protein, as well as other S acceptor proteins. This is Cysteine desulfurase IscS from Methylococcus capsulatus (strain ATCC 33009 / NCIMB 11132 / Bath).